We begin with the raw amino-acid sequence, 253 residues long: 5'-nucleotidase SurE (253 aa).

A divalent metal cation contacts are provided by Asp-8, Asp-9, Ser-39, and Asn-96.

Belongs to the SurE nucleotidase family. Requires a divalent metal cation as cofactor.

It is found in the cytoplasm. It catalyses the reaction a ribonucleoside 5'-phosphate + H2O = a ribonucleoside + phosphate. Nucleotidase that shows phosphatase activity on nucleoside 5'-monophosphates. The sequence is that of 5'-nucleotidase SurE from Rhodopirellula baltica (strain DSM 10527 / NCIMB 13988 / SH1).